We begin with the raw amino-acid sequence, 78 residues long: LYR motif-containing protein 9 (78 aa).

Belongs to the complex I LYR family. LYRM9 subfamily.

The polypeptide is LYR motif-containing protein 9 (Lyrm9) (Mus musculus (Mouse)).